We begin with the raw amino-acid sequence, 169 residues long: Methanogen homoaconitase small subunit (169 aa).

A YLRT motif is present at residues 27–30; sequence YLRT.

Belongs to the LeuD family. LeuD type 2 subfamily. In terms of assembly, heterotetramer of 2 HacA and 2 HacB proteins.

It carries out the reaction (2R)-homocitrate = (2R,3S)-homoisocitrate. The enzyme catalyses (2R)-homocitrate = cis-homoaconitate + H2O. It catalyses the reaction (2R,3S)-homoisocitrate = cis-homoaconitate + H2O. The catalysed reaction is cis-(homo)2aconitate + H2O = (2R,3S)-iso(homo)2citrate. It carries out the reaction cis-(homo)3aconitate + H2O = (2R,3S)-iso(homo)3citrate. Its pathway is organic acid metabolism; 2-oxosuberate biosynthesis. Its function is as follows. Component of a hydro-lyase with broad substrate specificity for cis-unsaturated tricarboxylic acids. Catalyzes both the reversible dehydration of (R)-homocitrate ((R)-2-hydroxybutane-1,2,4-tricarboxylate) to produce cis-homoaconitate ((Z)-but-1-ene-1,2,4-tricarboxylate), and its hydration to homoisocitrate ((1R,2S)-1-hydroxybutane-1,2,4-tricarboxylate). Is also able to hydrate the analogous longer chain substrates cis-homo(2)-aconitate, cis-homo(3)-aconitate. These reactions are part of the biosynthesis pathway of coenzyme B. The chain is Methanogen homoaconitase small subunit (hacB) from Methanosarcina mazei (strain ATCC BAA-159 / DSM 3647 / Goe1 / Go1 / JCM 11833 / OCM 88) (Methanosarcina frisia).